A 382-amino-acid chain; its full sequence is D-galactonate dehydratase (382 aa).

Asp-183 provides a ligand contact to Mg(2+). The active-site Proton donor is the His-185. Glu-209 and Glu-235 together coordinate Mg(2+). His-285 serves as the catalytic Proton acceptor.

This sequence belongs to the mandelate racemase/muconate lactonizing enzyme family. GalD subfamily. The cofactor is Mg(2+).

It carries out the reaction D-galactonate = 2-dehydro-3-deoxy-D-galactonate + H2O. It participates in carbohydrate acid metabolism; D-galactonate degradation; D-glyceraldehyde 3-phosphate and pyruvate from D-galactonate: step 1/3. Catalyzes the dehydration of D-galactonate to 2-keto-3-deoxy-D-galactonate. This is D-galactonate dehydratase from Klebsiella pneumoniae subsp. pneumoniae (strain ATCC 700721 / MGH 78578).